A 450-amino-acid chain; its full sequence is Histidinol dehydrogenase (450 aa).

Residues Tyr135, Gln197, and Asn225 each coordinate NAD(+). Substrate contacts are provided by Thr248, Gln270, and His273. The Zn(2+) site is built by Gln270 and His273. Active-site proton acceptor residues include Glu339 and His340. The substrate site is built by His340, Asp373, Glu427, and His432. Zn(2+) is bound at residue Asp373. His432 is a binding site for Zn(2+).

The protein belongs to the histidinol dehydrogenase family. Requires Zn(2+) as cofactor.

It carries out the reaction L-histidinol + 2 NAD(+) + H2O = L-histidine + 2 NADH + 3 H(+). It functions in the pathway amino-acid biosynthesis; L-histidine biosynthesis; L-histidine from 5-phospho-alpha-D-ribose 1-diphosphate: step 9/9. Catalyzes the sequential NAD-dependent oxidations of L-histidinol to L-histidinaldehyde and then to L-histidine. The polypeptide is Histidinol dehydrogenase (Corynebacterium jeikeium (strain K411)).